We begin with the raw amino-acid sequence, 341 residues long: MERAVPLAVPLGQTEVFQALQRLHMTIFSQSVSPCGKFLAAGNNYGQIAIFSLSSALSSEAKEESKKPVVTFQAHDGPVYSMVSTDRHLLSAGDGEVKAWLWAEMLKKGCKELWRRQPPYRTSLEVPEINALLLVPKENSLILAGGDCQLHTMDLETGTFTRVLRGHTDYIHCLALRERSPEVLSGGEDGAVRLWDLRTAKEVQTIEVYKHEECSRPHNGRWIGCLATDSDWMVCGGGPALTLWHLRSSTPTTIFPIRAPQKHVTFYQDLILSAGQGRCVNQWQLSGELKAQVPGSSPGLLSLSLNQQPAAPECKVLTAAGNSCRVDVFTNLGYRAFSLSF.

7 WD repeats span residues 22-61 (RLHM…SSEA), 74-112 (AHDG…GCKE), 124-165 (LEVP…RVLR), 166-205 (GHTD…EVQT), 215-254 (SRPH…PTTI), 256-293 (PIRA…KAQV), and 295-339 (GSSP…AFSL). S180 carries the post-translational modification Phosphoserine.

This sequence belongs to the WD repeat THOC6 family. In terms of assembly, component of the THO subcomplex, which is composed of THOC1, THOC2, THOC3, THOC5, THOC6 and THOC7. The THO subcomplex interacts with DDX39B to form the THO-DDX39B complex which multimerizes into a 28-subunit tetrameric assembly. Component of the transcription/export (TREX) complex at least composed of ALYREF/THOC4, DDX39B, SARNP/CIP29, CHTOP and the THO subcomplex; in the complex interacts with THOC5; together with THOC5 and THOC7, plays a key structural role in the oligomerization of the THO-DDX39B complex. TREX seems to have a dynamic structure involving ATP-dependent remodeling.

It localises to the nucleus. The protein resides in the nucleus speckle. Functionally, component of the THO subcomplex of the TREX complex which is thought to couple mRNA transcription, processing and nuclear export, and which specifically associates with spliced mRNA and not with unspliced pre-mRNA. Plays a key structural role in the oligomerization of the THO-DDX39B complex. TREX is recruited to spliced mRNAs by a transcription-independent mechanism, binds to mRNA upstream of the exon-junction complex (EJC) and is recruited in a splicing- and cap-dependent manner to a region near the 5' end of the mRNA where it functions in mRNA export to the cytoplasm via the TAP/NXF1 pathway. Plays a role in apoptosis negative control involved in brain development. (Microbial infection) The TREX complex is essential for the export of Kaposi's sarcoma-associated herpesvirus (KSHV) intronless mRNAs and infectious virus production. The protein is THO complex subunit 6 (THOC6) of Homo sapiens (Human).